A 147-amino-acid polypeptide reads, in one-letter code: Plasminogen receptor (KT) (147 aa).

Topologically, residues 1 to 52 (MGFIFSKSMNESMKNQKEFMLMNARLQLERQLIMQSEMRERQMAMQIAWSRE) are extracellular. A helical transmembrane segment spans residues 53–73 (FLKYFGTFFGLAAISLTAGAI). The Cytoplasmic segment spans residues 74–78 (KKKKP). A helical membrane pass occupies residues 79–99 (AFLVPIVPLSFILTYQYDLGY). The Extracellular portion of the chain corresponds to 100–147 (GTLLERMKGEAEDILETEKSKLQLPRGMITFESIEKARKEQSRFFIDK).

As to quaternary structure, interacts with PLAT and PLAUR. As to expression, expressed in peripheral blood cells and monocytes. Expressed in adrenal medulla.

It is found in the cell membrane. Receptor for plasminogen. Regulates urokinase plasminogen activator-dependent and stimulates tissue-type plasminogen activator-dependent cell surface plasminogen activation. Proposed to be part of a local catecholaminergic cell plasminogen activation system that regulates neuroendocrine prohormone processing. Involved in regulation of inflammatory response; regulates monocyte chemotactic migration and matrix metalloproteinase activation, such as of MMP2 and MMP9. The protein is Plasminogen receptor (KT) (PLGRKT) of Homo sapiens (Human).